Here is a 238-residue protein sequence, read N- to C-terminus: uncharacterized protein (238 aa).

Helical transmembrane passes span 19–39, 79–99, and 141–161; these read IVIE…FQII, IILF…AEFI, and YVEI…LIKC.

Its subcellular location is the cell membrane. This is an uncharacterized protein from Methanocaldococcus jannaschii (strain ATCC 43067 / DSM 2661 / JAL-1 / JCM 10045 / NBRC 100440) (Methanococcus jannaschii).